The primary structure comprises 579 residues: Potassium-transporting ATPase potassium-binding subunit (579 aa).

10 helical membrane passes run 2–22 (MNLV…AIPL), 66–86 (SFSV…LHIF), 135–155 (GLTV…FALI), 177–197 (VLYI…SQGV), 260–280 (TILS…ALCF), 292–312 (GIAI…IVGV), 391–411 (VFGG…LAVF), 437–457 (VLVC…ASIL), 490–510 (FAGF…SMIF), and 546–566 (FIGL…FPAL).

Belongs to the KdpA family. In terms of assembly, the system is composed of three essential subunits: KdpA, KdpB and KdpC.

The protein localises to the cell membrane. In terms of biological role, part of the high-affinity ATP-driven potassium transport (or Kdp) system, which catalyzes the hydrolysis of ATP coupled with the electrogenic transport of potassium into the cytoplasm. This subunit binds the extracellular potassium ions and delivers the ions to the membrane domain of KdpB through an intramembrane tunnel. The protein is Potassium-transporting ATPase potassium-binding subunit of Clostridium botulinum (strain Eklund 17B / Type B).